We begin with the raw amino-acid sequence, 193 residues long: Molybdopterin synthase catalytic subunit (193 aa).

Substrate-binding positions include 118 to 119 (HR), Lys-134, and 141 to 143 (KKE). The interval 159 to 193 (DRTTTDGTTASSPAPATRPAKGGGCCGRKVRVNES) is disordered. A compositionally biased stretch (low complexity) spans 163–178 (TDGTTASSPAPATRPA).

This sequence belongs to the MoaE family. MOCS2B subfamily. As to quaternary structure, heterotetramer; composed of 2 small (MOCS2A) and 2 large (MOCS2B) subunits.

Its subcellular location is the cytoplasm. The catalysed reaction is 2 [molybdopterin-synthase sulfur-carrier protein]-C-terminal-Gly-aminoethanethioate + cyclic pyranopterin phosphate + H2O = molybdopterin + 2 [molybdopterin-synthase sulfur-carrier protein]-C-terminal Gly-Gly + 2 H(+). It functions in the pathway cofactor biosynthesis; molybdopterin biosynthesis. Catalytic subunit of the molybdopterin synthase complex, a complex that catalyzes the conversion of precursor Z into molybdopterin. Acts by mediating the incorporation of 2 sulfur atoms from thiocarboxylated MOCS2A into precursor Z to generate a dithiolene group. The protein is Molybdopterin synthase catalytic subunit of Oryza sativa subsp. japonica (Rice).